The following is a 162-amino-acid chain: 6,7-dimethyl-8-ribityllumazine synthase (162 aa).

Residues F23, 61–63, and 85–87 each bind 5-amino-6-(D-ribitylamino)uracil; these read AYE and AVI. 90 to 91 contacts (2S)-2-hydroxy-3-oxobutyl phosphate; the sequence is DT. The Proton donor role is filled by H93. Residue F118 participates in 5-amino-6-(D-ribitylamino)uracil binding. R132 contributes to the (2S)-2-hydroxy-3-oxobutyl phosphate binding site.

The protein belongs to the DMRL synthase family.

It carries out the reaction (2S)-2-hydroxy-3-oxobutyl phosphate + 5-amino-6-(D-ribitylamino)uracil = 6,7-dimethyl-8-(1-D-ribityl)lumazine + phosphate + 2 H2O + H(+). It functions in the pathway cofactor biosynthesis; riboflavin biosynthesis; riboflavin from 2-hydroxy-3-oxobutyl phosphate and 5-amino-6-(D-ribitylamino)uracil: step 1/2. Catalyzes the formation of 6,7-dimethyl-8-ribityllumazine by condensation of 5-amino-6-(D-ribitylamino)uracil with 3,4-dihydroxy-2-butanone 4-phosphate. This is the penultimate step in the biosynthesis of riboflavin. The chain is 6,7-dimethyl-8-ribityllumazine synthase from Synechococcus sp. (strain CC9902).